The following is a 325-amino-acid chain: Probable pectate lyase B (325 aa).

The N-terminal stretch at 1 to 15 (MRLPTLFMLAAIATA) is a signal peptide. Ca(2+)-binding residues include Asp-132, Asp-161, and Asp-165. Arg-218 is a catalytic residue.

It belongs to the polysaccharide lyase 1 family. Ca(2+) serves as cofactor.

Its subcellular location is the secreted. The catalysed reaction is Eliminative cleavage of (1-&gt;4)-alpha-D-galacturonan to give oligosaccharides with 4-deoxy-alpha-D-galact-4-enuronosyl groups at their non-reducing ends.. In terms of biological role, pectinolytic enzyme consist of four classes of enzymes: pectin lyase, polygalacturonase, pectin methylesterase and rhamnogalacturonase. Among pectinolytic enzymes, pectin lyase is the most important in depolymerization of pectin, since it cleaves internal glycosidic bonds of highly methylated pectins. Favors pectate, the anion, over pectin, the methyl ester. The sequence is that of Probable pectate lyase B (plyB) from Aspergillus terreus (strain NIH 2624 / FGSC A1156).